The chain runs to 330 residues: 1-aminocyclopropane-1-carboxylate oxidase 2 (330 aa).

Positions proline 153 to proline 253 constitute a Fe2OG dioxygenase domain. Fe cation-binding residues include histidine 177, aspartate 179, and histidine 234.

The protein belongs to the iron/ascorbate-dependent oxidoreductase family. In terms of assembly, monomer. Fe cation is required as a cofactor.

The catalysed reaction is 1-aminocyclopropane-1-carboxylate + L-ascorbate + O2 = ethene + L-dehydroascorbate + hydrogen cyanide + CO2 + 2 H2O. The protein operates within alkene biosynthesis; ethylene biosynthesis via S-adenosyl-L-methionine; ethylene from S-adenosyl-L-methionine: step 2/2. The chain is 1-aminocyclopropane-1-carboxylate oxidase 2 (ACO2) from Malus domestica (Apple).